Here is a 533-residue protein sequence, read N- to C-terminus: Tyrosine/DOPA decarboxylase 3 (533 aa).

Residue Lys319 is modified to N6-(pyridoxal phosphate)lysine.

It belongs to the group II decarboxylase family. As to quaternary structure, homodimer. The cofactor is pyridoxal 5'-phosphate. In terms of tissue distribution, roots.

It catalyses the reaction L-tyrosine + H(+) = tyramine + CO2. The enzyme catalyses L-dopa + H(+) = dopamine + CO2. The catalysed reaction is 5-hydroxy-L-tryptophan + H(+) = serotonin + CO2. Marginally higher substrate specificity for L-DOPA over L-tyrosine. The polypeptide is Tyrosine/DOPA decarboxylase 3 (TYDC3) (Papaver somniferum (Opium poppy)).